A 226-amino-acid chain; its full sequence is uncharacterized protein (226 aa).

One can recognise an HTH arsR-type domain in the interval 1–92 (MNPNIAKISS…QLLHIAPKAK (92 aa)). The segment at residues 32–55 (AGELAYLANIKPQTASFHLNKLLE) is a DNA-binding region (H-T-H motif).

This is an uncharacterized protein from Bacillus subtilis (strain 168).